The following is an 85-amino-acid chain: Exodeoxyribonuclease 7 small subunit (85 aa).

Belongs to the XseB family. As to quaternary structure, heterooligomer composed of large and small subunits.

It localises to the cytoplasm. The catalysed reaction is Exonucleolytic cleavage in either 5'- to 3'- or 3'- to 5'-direction to yield nucleoside 5'-phosphates.. Functionally, bidirectionally degrades single-stranded DNA into large acid-insoluble oligonucleotides, which are then degraded further into small acid-soluble oligonucleotides. The polypeptide is Exodeoxyribonuclease 7 small subunit (Alkalilimnicola ehrlichii (strain ATCC BAA-1101 / DSM 17681 / MLHE-1)).